Here is a 185-residue protein sequence, read N- to C-terminus: Ribosome-recycling factor (185 aa).

Belongs to the RRF family.

The protein localises to the cytoplasm. Its function is as follows. Responsible for the release of ribosomes from messenger RNA at the termination of protein biosynthesis. May increase the efficiency of translation by recycling ribosomes from one round of translation to another. The protein is Ribosome-recycling factor of Citrifermentans bemidjiense (strain ATCC BAA-1014 / DSM 16622 / JCM 12645 / Bem) (Geobacter bemidjiensis).